The sequence spans 352 residues: Minor capsid protein VP2 (352 aa).

Gly2 carries the N-myristoyl glycine; by host lipid modification. The segment at 273–308 is D1; it reads SGEFIEKTLAPGGANQRIAPQWMLPLLLGLYGTVTP. Residues 290-310 traverse the membrane as a helical segment; it reads IAPQWMLPLLLGLYGTVTPAL. The tract at residues 312–352 is disordered; that stretch reads AYEDAPSKKKRRMSRGSSQKAKGPRASSKTSYKRRRRSTRS. Residues 313-352 are DNA-binding; the sequence is YEDAPSKKKRRMSRGSSQKAKGPRASSKTSYKRRRRSTRS. The short motif at 316–324 is the Nuclear localization signal element; it reads APSKKKRRM. The span at 342-352 shows a compositional bias: basic residues; that stretch reads SYKRRRRSTRS.

The protein belongs to the polyomaviruses capsid protein VP2 family. As to quaternary structure, forms homooligomers, and heterooligomers with VP3 in the endoplasmic reticulum membrane. Interacts (via D1 domain) with VP1. Interacts (via D1 domain) with VP1.

It is found in the virion. It localises to the host nucleus. Its subcellular location is the host endoplasmic reticulum. The protein localises to the host endoplasmic reticulum membrane. Structural protein that resides within the core of the capsid surrounded by 72 VP1 pentamers. Participates in host cell receptor binding together with VP1. Following virus endocytosis and trafficking to the endoplasmic reticulum, VP2 and VP3 form oligomers and integrate into the endoplasmic reticulum membrane. Heterooligomer VP2-VP3 may create a viroporin for transporting the viral genome across the endoplasmic reticulum membrane to the cytoplasm. Nuclear entry of the viral DNA involves the selective exposure and importin recognition of VP2 or VP3 nuclear localization signal (shared C-terminus). Plays a role in virion assembly within the nucleus in particular through a DNA-binding domain located in the C-terminal region. An N-terminal myristoylation suggests a scaffold function for virion assembly. In terms of biological role, structural protein that resides within the core of the capsid surrounded by 72 VP1 pentamers. Following virus endocytosis and trafficking to the endoplasmic reticulum, VP2 and VP3 form oligomers and integrate into the endoplasmic reticulum membrane. Heterooligomer VP2-VP3 may create a viroporin for transporting the viral genome across the endoplasmic reticulum membrane to the cytoplasm. Nuclear entry of the viral DNA involves the selective exposure and importin recognition of VP2 or VP3 nuclear localization signal (shared C-terminus). Plays a role in virion assembly within the nucleus. May participate in host cell lysis when associated with VP4. Its function is as follows. Viroporin inducing perforation of cellular membranes to trigger virus progeny release. Forms pores of 3 nm inner diameter. VP4 is expressed about 24 hours after the late structural proteins and is not incorporated into the mature virion. This Simian virus 12 (strain wt100) (SV-12) protein is Minor capsid protein VP2.